Consider the following 89-residue polypeptide: Small ribosomal subunit protein uS17 (89 aa).

It belongs to the universal ribosomal protein uS17 family. In terms of assembly, part of the 30S ribosomal subunit.

Functionally, one of the primary rRNA binding proteins, it binds specifically to the 5'-end of 16S ribosomal RNA. This chain is Small ribosomal subunit protein uS17, found in Ralstonia pickettii (strain 12J).